The chain runs to 518 residues: Transcription factor TT8 (518 aa).

Coiled coils occupy residues 220 to 240 (EVHE…MSEE) and 405 to 428 (VNHL…KRTR). Residues 359–408 (REDLSHVVAERRRREKLNEKFITLRSMVPFVTKMDKVSILGDTIAYVNHL) enclose the bHLH domain.

The protein belongs to the bHLH protein family. In terms of assembly, homodimer. Interacts with MYB4, MYB5, MYB6, MYB82, MYB113, MYB114, MYB75/PAP1, MYB90/PAP2, and TT2. As to expression, buds, flowers and developing siliques, but not in leaves, stems and roots.

Its subcellular location is the nucleus. Functionally, transcription activator, when associated with MYB75/PAP1 or MYB90/PAP2. Involved in the control of flavonoid pigmentation. Plays a key role in regulating leucoanthocyanidin reductase (BANYULS) and dihydroflavonol-4-reductase (DFR). Not required for leucoanthocyanidin dioxygenase (LDOX) expression. The sequence is that of Transcription factor TT8 from Arabidopsis thaliana (Mouse-ear cress).